Here is a 203-residue protein sequence, read N- to C-terminus: DNA-directed RNA polymerase subunit gamma (203 aa).

4 residues coordinate Zn(2+): Cys-34, Cys-36, Cys-49, and Cys-52.

Belongs to the RNA polymerase beta' chain family. RpoC1 subfamily. In terms of assembly, in cyanobacteria the RNAP catalytic core is composed of 2 alpha, 1 beta, 1 beta', 1 gamma and 1 omega subunit. When a sigma factor is associated with the core the holoenzyme is formed, which can initiate transcription. The cofactor is Zn(2+).

The enzyme catalyses RNA(n) + a ribonucleoside 5'-triphosphate = RNA(n+1) + diphosphate. In terms of biological role, DNA-dependent RNA polymerase catalyzes the transcription of DNA into RNA using the four ribonucleoside triphosphates as substrates. The chain is DNA-directed RNA polymerase subunit gamma (rpoC1) from Prochlorothrix hollandica.